The primary structure comprises 446 residues: Sphingomyelinase phosphodiesterase C (446 aa).

A signal peptide spans 1–26; that stretch reads MKFRNNLTLYLIFIIVFTIYISLTIS. Asn-6 carries an N-linked (GlcNAc...) asparagine glycan. Positions 39 and 41 each coordinate Zn(2+). Cys-56 and Cys-78 are oxidised to a cystine. Asp-107 contributes to the Zn(2+) binding site. 2 N-linked (GlcNAc...) asparagine glycosylation sites follow: Asn-118 and Asn-128. Residue Asn-148 coordinates Zn(2+). N-linked (GlcNAc...) asparagine glycosylation is found at Asn-178, Asn-217, Asn-229, and Asn-234. Residues His-247, His-287, and His-289 each contribute to the Zn(2+) site. N-linked (GlcNAc...) asparagine glycans are attached at residues Asn-342 and Asn-357. Cys-429 and Cys-442 are disulfide-bonded.

Belongs to the acid sphingomyelinase family. Requires Zn(2+) as cofactor.

The protein resides in the secreted. The chain is Sphingomyelinase phosphodiesterase C (sgmC) from Dictyostelium discoideum (Social amoeba).